Here is an 841-residue protein sequence, read N- to C-terminus: Probable outer membrane protein pmp2 (841 aa).

A signal peptide spans 1-24 (MKIPLRFLLISLVPTLSMSNLLGA). The 305-residue stretch at 537–841 (GAPYEKRFWV…NVDAGSKIKF (305 aa)) folds into the Autotransporter domain.

It belongs to the PMP outer membrane protein family.

It is found in the secreted. It localises to the cell wall. Its subcellular location is the cell outer membrane. In Chlamydia pneumoniae (Chlamydophila pneumoniae), this protein is Probable outer membrane protein pmp2 (pmp2).